Reading from the N-terminus, the 20-residue chain is MEVGKLGKPYPLLNLAYVGV.

The protein is Protein YfiS of Escherichia coli (strain K12).